Reading from the N-terminus, the 103-residue chain is Large ribosomal subunit protein uL23 (103 aa).

Belongs to the universal ribosomal protein uL23 family. In terms of assembly, part of the 50S ribosomal subunit. Contacts protein L29, and trigger factor when it is bound to the ribosome.

Functionally, one of the early assembly proteins it binds 23S rRNA. One of the proteins that surrounds the polypeptide exit tunnel on the outside of the ribosome. Forms the main docking site for trigger factor binding to the ribosome. The protein is Large ribosomal subunit protein uL23 of Aquifex aeolicus (strain VF5).